Consider the following 1249-residue polypeptide: Apoptotic protease-activating factor 1 (1249 aa).

The CARD domain occupies 1 to 90 (MDAKARNCLL…KDLAALLQSG (90 aa)). The region spanning 106–415 (ITSFVRTVLC…LETEEVEDIL (310 aa)) is the NB-ARC domain. ATP-binding positions include 154–161 (GMAGCGKS) and arginine 265. The stretch at 613–652 (PHTDAVYHACFSQDGQRIASCGADKTLQVFKAETGEKLLD) is one WD 1-1 repeat. The WD 1-2 repeat unit spans residues 655–694 (AHEDEVLCCAFSSDDSYIATCSADKKVKIWDSATGKLVHT). A WD 1-3 repeat occupies 697–738 (EHSEQVNCCHFTNKSNHLLLATGSNDFFLKLWDLNQKECRNT). A WD 1-4 repeat occupies 741-780 (GHTNSVNHCRFSPDDELLASCSADGTLRLWDVRSANERKS). The stretch at 796–837 (DVEVIVKCCSWSADGDKIIVAAKNKVLLFDIHTSGLLAEIHT) is one WD 1-5 repeat. The WD 1-6 repeat unit spans residues 838-877 (GHHSTIQYCDFSPYDHLAVIALSQYCVELWNIDSRLKVAD). One copy of the WD 1-7 repeat lies at 880–910 (GHLSWVHGVMFSPDGSSFLTASDDQTIRVWE). An interpropeller linker region spans residues 910–921 (ETKKVCKNSAIV). A WD 2-1 repeat occupies 922–958 (LKQEIDVVFQENETMVLAVDNIRGLQLIAGKTGQIDY). A WD 2-2 repeat occupies 959-998 (LPEAQVSCCCLSPHLEYVAFGDEDGAIKIIELPNNRVFSS). The WD 2-3 repeat unit spans residues 1001-1040 (GHKKAVRHIQFTADGKTLISSSEDSVIQVWNWQTGDYVFL). The WD 2-4 repeat unit spans residues 1042-1080 (AHQETVKDFRLLQDSRLLSWSFDGTVKVWNVITGRIERD). The WD 2-5 repeat unit spans residues 1083-1122 (CHQGTVLSCAISSDATKFSSTSADKTAKIWSFDLLSPLHE). Residues 1125-1164 (GHNGCVRCSAFSLDGILLATGDDNGEIRIWNVSDGQLLHS) form a WD 2-6 repeat. A WD 2-7 repeat occupies 1176 to 1213 (THGGWVTDVCFSPDSKTLVSAGGYLKWWNVATGDSSQT). Residues 1214-1249 (FYTNGTNLKKIHVSPDFRTYVTVDNLGILYILQVLE) form a WD 2-8 repeat.

In terms of assembly, monomer. Oligomerizes to a heptameric ring, known as the apoptosome, upon binding of cytochrome c and dATP. Oligomeric Apaf-1 and pro-caspase-9 bind to each other via their respective NH2-terminal CARD domains and consecutively mature caspase-9 is released from the complex. Interacts with UACA. It may also interact with Bcl-XL. Interacts with APIP. Interacts (via CARD and NACHT domains) with NAIP/BIRC1 (via NACHT domain). Interacts with CIAO2A. As to expression, highly expressed in lung and spleen, weakly in brain and kidney and not detectable in liver.

Its subcellular location is the cytoplasm. Its function is as follows. Oligomeric Apaf-1 mediates the cytochrome c-dependent autocatalytic activation of pro-caspase-9 (Apaf-3), leading to the activation of caspase-3 and apoptosis. This activation requires ATP. The protein is Apoptotic protease-activating factor 1 (Apaf1) of Mus musculus (Mouse).